A 694-amino-acid chain; its full sequence is MKPLTNGDLFKSPTLIKISALVFVTVAFFYLGKHWSDDGYQQLVFFSSSTSGSSIPEVSVSPNSNRVFNLSAIIPTNHTQIEIPATIRQQPPSVVADTEKVKVEANPPPPPPPSPSPPPPPGPVKSFGIVDANGVMSDDFEVGEVESDTVEDWGNQTEIVEAKSDGDSKARVRIKKFGMCPESMREYIPCLDNTDVIKKLKSTERGERFERHCPEKGKGLNCLVPPPKGYRQPIPWPKSRDEVWFSNVPHTRLVEDKGGQNWISRDKNKFKFPGGGTQFIHGADQYLDQMSKMVSDITFGKHIRVAMDVGCGVASFGAYLLSRDVMTMSVAPKDVHENQIQFALERGVPAMAAAFATRRLLYPSQAFDLIHCSRCRINWTRDDGILLLEINRMLRAGGYFAWAAQPVYKHEPALEEQWTEMLNLTISLCWKLVKKEGYVAIWQKPFNNDCYLSREAGTKPPLCDESDDPDNVWYTNLKPCISRIPEKGYGGNVPLWPARLHTPPDRLQTIKFDSYIARKELFKAESKYWNEIIGGYVRALKWKKMKLRNVLDMRAGFGGFAAALNDHKLDCWVLSVVPVSGPNTLPVIYDRGLLGVMHDWCEPFDTYPRTYDFLHASGLFSIERKRCEMSTILLEMDRILRPGGRAYIRDSIDVMDEIQEITKAMGWHTSLRDTSEGPHASYRILTCEKRLLRA.

Residues 1–14 (MKPLTNGDLFKSPT) lie on the Cytoplasmic side of the membrane. A helical; Signal-anchor for type II membrane protein membrane pass occupies residues 15 to 32 (LIKISALVFVTVAFFYLG). Residues 33 to 694 (KHWSDDGYQQ…LTCEKRLLRA (662 aa)) are Lumenal-facing. 2 N-linked (GlcNAc...) asparagine glycosylation sites follow: N69 and N77. A disordered region spans residues 83-128 (IPATIRQQPPSVVADTEKVKVEANPPPPPPPSPSPPPPPGPVKSFG). Residues 106–123 (NPPPPPPPSPSPPPPPGP) are compositionally biased toward pro residues. Residues N155, N378, and N423 are each glycosylated (N-linked (GlcNAc...) asparagine).

Belongs to the methyltransferase superfamily.

Its subcellular location is the golgi apparatus membrane. The chain is Probable methyltransferase PMT11 from Arabidopsis thaliana (Mouse-ear cress).